Consider the following 155-residue polypeptide: DNA gyrase inhibitor (155 aa).

It belongs to the DNA gyrase inhibitor family. Interacts with DNA gyrase.

The protein localises to the cytoplasm. Its function is as follows. Inhibits the supercoiling activity of DNA gyrase. Acts by inhibiting DNA gyrase at an early step, prior to (or at the step of) binding of DNA by the gyrase. It protects cells against toxins that target DNA gyrase, by inhibiting activity of these toxins and reducing the formation of lethal double-strand breaks in the cell. The protein is DNA gyrase inhibitor of Escherichia fergusonii (strain ATCC 35469 / DSM 13698 / CCUG 18766 / IAM 14443 / JCM 21226 / LMG 7866 / NBRC 102419 / NCTC 12128 / CDC 0568-73).